The primary structure comprises 363 residues: Oxygen-dependent coproporphyrinogen-III oxidase (363 aa).

Residue Ser119 coordinates substrate. The a divalent metal cation site is built by His123 and His133. The active-site Proton donor is His133. 135–137 (NYR) contributes to the substrate binding site. 2 residues coordinate a divalent metal cation: His167 and His197. The segment at 287 to 322 (YVEFNLVWDRGTIFGLQTNGRTESILMSLPPLVRWE) is important for dimerization.

The protein belongs to the aerobic coproporphyrinogen-III oxidase family. In terms of assembly, homodimer. The cofactor is a divalent metal cation.

It localises to the cytoplasm. The enzyme catalyses coproporphyrinogen III + O2 + 2 H(+) = protoporphyrinogen IX + 2 CO2 + 2 H2O. The protein operates within porphyrin-containing compound metabolism; protoporphyrin-IX biosynthesis; protoporphyrinogen-IX from coproporphyrinogen-III (O2 route): step 1/1. Its function is as follows. Involved in the heme and chlorophyll biosynthesis. Catalyzes the aerobic oxidative decarboxylation of propionate groups of rings A and B of coproporphyrinogen-III to yield the vinyl groups in protoporphyrinogen-IX. This Parasynechococcus marenigrum (strain WH8102) protein is Oxygen-dependent coproporphyrinogen-III oxidase.